We begin with the raw amino-acid sequence, 487 residues long: MAVIVLAAGAGTRMKSTTQKTLHSIGGRTLLSHSLHAAAGIDPARIVAVIGHGREQVGPAVAEVAEQLGRSIDTAIQEQQNGTGHAVQCAMEQLEGFEGTVVVTNADVPLLSPETLQELTATHDGASVTVLSVNQDNPTGYGRILRTNDGMVTAIVEEKDATEKQKEITEVNSGVFAFDAAILRDGLAQLNTDNAQGELYLTDVLSIARRAGHPVRAHIASDAAELAGVNDRVQLAAAGAELNRRTVTAAMRGGATIVDPATTWIDVDVQVGQDVTILPGTQLLGTTTIGDNAQIGPDTTLENVKVGEGAQVVRTHGFDSTIGPRAEVGPFTYIRPGTVLGEEGKLGGFVEAKKANIGRGSKVPHLTYVGDATIGEYSNIGASSVFVNYDGVNKHHTTVGSHVRTGSDSMFIAPVVVGDGAYSGAGTVIKEDVPPGALVVSGGKQRNVEGWVAKKRPGTPAAEAGEAAAKRVAEGGSPTSTPQADQE.

The interval 1–232 (MAVIVLAAGA…AAELAGVNDR (232 aa)) is pyrophosphorylase. Residues 6 to 9 (LAAG), lysine 20, glutamine 77, and 82 to 83 (GT) contribute to the UDP-N-acetyl-alpha-D-glucosamine site. Mg(2+) is bound at residue aspartate 107. UDP-N-acetyl-alpha-D-glucosamine is bound by residues glycine 142, glutamate 157, asparagine 172, and asparagine 230. Mg(2+) is bound at residue asparagine 230. Residues 233-253 (VQLAAAGAELNRRTVTAAMRG) form a linker region. An N-acetyltransferase region spans residues 254–487 (GATIVDPATT…PTSTPQADQE (234 aa)). Arginine 335 and lysine 353 together coordinate UDP-N-acetyl-alpha-D-glucosamine. Histidine 365 serves as the catalytic Proton acceptor. UDP-N-acetyl-alpha-D-glucosamine-binding residues include tyrosine 368 and asparagine 379. Residues alanine 382, 388–389 (NY), serine 407, and alanine 425 each bind acetyl-CoA. Residues 453–487 (AKKRPGTPAAEAGEAAAKRVAEGGSPTSTPQADQE) are disordered. The span at 477–487 (SPTSTPQADQE) shows a compositional bias: polar residues.

This sequence in the N-terminal section; belongs to the N-acetylglucosamine-1-phosphate uridyltransferase family. The protein in the C-terminal section; belongs to the transferase hexapeptide repeat family. In terms of assembly, homotrimer. The cofactor is Mg(2+).

The protein resides in the cytoplasm. The enzyme catalyses alpha-D-glucosamine 1-phosphate + acetyl-CoA = N-acetyl-alpha-D-glucosamine 1-phosphate + CoA + H(+). It catalyses the reaction N-acetyl-alpha-D-glucosamine 1-phosphate + UTP + H(+) = UDP-N-acetyl-alpha-D-glucosamine + diphosphate. It participates in nucleotide-sugar biosynthesis; UDP-N-acetyl-alpha-D-glucosamine biosynthesis; N-acetyl-alpha-D-glucosamine 1-phosphate from alpha-D-glucosamine 6-phosphate (route II): step 2/2. Its pathway is nucleotide-sugar biosynthesis; UDP-N-acetyl-alpha-D-glucosamine biosynthesis; UDP-N-acetyl-alpha-D-glucosamine from N-acetyl-alpha-D-glucosamine 1-phosphate: step 1/1. The protein operates within bacterial outer membrane biogenesis; LPS lipid A biosynthesis. Catalyzes the last two sequential reactions in the de novo biosynthetic pathway for UDP-N-acetylglucosamine (UDP-GlcNAc). The C-terminal domain catalyzes the transfer of acetyl group from acetyl coenzyme A to glucosamine-1-phosphate (GlcN-1-P) to produce N-acetylglucosamine-1-phosphate (GlcNAc-1-P), which is converted into UDP-GlcNAc by the transfer of uridine 5-monophosphate (from uridine 5-triphosphate), a reaction catalyzed by the N-terminal domain. The polypeptide is Bifunctional protein GlmU (Corynebacterium jeikeium (strain K411)).